Reading from the N-terminus, the 432-residue chain is Adenosylhomocysteinase (432 aa).

Substrate is bound by residues threonine 56, aspartate 131, and glutamate 156. An NAD(+)-binding site is contributed by 157–159 (TTT). Positions 186 and 190 each coordinate substrate. NAD(+)-binding positions include 222–227 (GDVGKG), glutamate 243, asparagine 248, 299–301 (IGH), asparagine 346, histidine 353, lysine 426, 426–430 (KPDHY), and tyrosine 430.

It belongs to the adenosylhomocysteinase family. In terms of assembly, interacts with AhcyL1; the interaction may negatively regulate Ahcy catalytic activity. It depends on NAD(+) as a cofactor.

It carries out the reaction S-adenosyl-L-homocysteine + H2O = L-homocysteine + adenosine. It functions in the pathway amino-acid biosynthesis; L-homocysteine biosynthesis; L-homocysteine from S-adenosyl-L-homocysteine: step 1/1. Adenosylhomocysteine is a competitive inhibitor of S-adenosyl-L-methionine-dependent methyl transferase reactions; therefore adenosylhomocysteinase may play a key role in the control of methylations via regulation of the intracellular concentration of adenosylhomocysteine. This chain is Adenosylhomocysteinase, found in Drosophila melanogaster (Fruit fly).